We begin with the raw amino-acid sequence, 388 residues long: Galactokinase (388 aa).

33 to 36 (EHTD) is a substrate binding site. ATP contacts are provided by residues serine 67 and 124–130 (GSGLSSS). Mg(2+) is bound by residues serine 130 and glutamate 162. Aspartate 174 functions as the Proton acceptor in the catalytic mechanism. Residue tyrosine 224 participates in substrate binding.

Belongs to the GHMP kinase family. GalK subfamily.

The protein localises to the cytoplasm. The enzyme catalyses alpha-D-galactose + ATP = alpha-D-galactose 1-phosphate + ADP + H(+). It participates in carbohydrate metabolism; galactose metabolism. Its function is as follows. Catalyzes the transfer of the gamma-phosphate of ATP to D-galactose to form alpha-D-galactose-1-phosphate (Gal-1-P). In Streptococcus thermophilus, this protein is Galactokinase.